A 419-amino-acid chain; its full sequence is Voltage-gated potassium channel subunit beta-1 (419 aa).

The interval 1 to 52 is disordered; that stretch reads MLAARTGAAGSQISEENTKLRRQSGFSVAGKDKSPKKASENAKDSSLSPSGE. Positions 30–43 are enriched in basic and acidic residues; that stretch reads GKDKSPKKASENAK. NADP(+) is bound by residues Thr-108, Trp-109, Gln-115, and Asp-137. Tyr-142 (proton donor/acceptor) is an active-site residue. Residues Asn-210, Ser-240, Arg-241, Gln-266, Trp-295, Ser-296, Pro-297, Leu-298, Ala-299, Cys-300, Lys-306, Arg-316, Gly-375, Ser-377, Gln-381, Glu-384, and Asn-385 each coordinate NADP(+).

This sequence belongs to the shaker potassium channel beta subunit family. In terms of assembly, homotetramer. Interaction with tetrameric potassium channel alpha subunits gives rise to a heterooctamer. Identified in potassium channel complexes containing KCNA1, KCNA2, KCNA4, KCNA5, KCNA6, KCNAB1 and KCNAB2. Part of a complex containing KCNA1, KCNA4 and LGI1; interaction with LGI1 inhibits down-regulation of KCNA1 channel activity. Interacts with the dimer formed by GNB1 and GNG2; this enhances KCNA1 binding. Interacts with SQSTM1. In brain, expression is most prominent in caudate nucleus, hippocampus and thalamus. Significant expression also detected in amygdala and subthalamic nucleus. Also expressed in both healthy and cardiomyopathic heart. Up to four times more abundant in left ventricle than left atrium.

The protein resides in the cytoplasm. It is found in the membrane. It localises to the cell membrane. The catalysed reaction is a primary alcohol + NADP(+) = an aldehyde + NADPH + H(+). It catalyses the reaction a secondary alcohol + NADP(+) = a ketone + NADPH + H(+). Functionally, regulatory subunit of the voltage-gated potassium (Kv) Shaker channels composed of pore-forming and potassium-conducting alpha subunits and of regulatory beta subunits. The beta-1/KCNAB1 cytoplasmic subunit mediates closure of delayed rectifier potassium channels by physically obstructing the pore via its N-terminal domain and increases the speed of channel closure for other family members. Promotes the inactivation of Kv1.1/KCNA1, Kv1.2/KCNA2, Kv1.4/KCNA4, Kv1.5/KCNA5 and Kv1.6/KCNA6 alpha subunit-containing channels. Displays nicotinamide adenine dinucleotide phosphate (NADPH)-dependent aldoketoreductase activity by catalyzing the NADPH-dependent reduction of a variety of endogenous aldehydes and ketones. The binding of NADPH is required for efficient down-regulation of potassium channel activity. Oxidation of the bound NADPH restrains N-terminal domain from blocking the channel, thereby decreasing N-type inactivation of potassium channel activity. Isoform KvB1.2 shows no effect on KCNA1, KCNA2 or KCNB1. This chain is Voltage-gated potassium channel subunit beta-1, found in Homo sapiens (Human).